The primary structure comprises 360 residues: Actin-like protein MamK (360 aa).

ATP-binding positions include lysine 22, 33 to 34, and aspartate 89; that span reads TS. Residue glutamate 156 participates in Mg(2+) binding. ATP-binding positions include 177–179, 231–235, and glycine 302; these read AGT and KEQFS.

The protein belongs to the FtsA/MreB family. MamK subfamily. As to quaternary structure, forms cytoplasmic filaments. Interacts with MamJ. Forms filaments in the absence of other magnetosome proteins and in E.coli. Filament formation in vitro requires ATP, GTP or a non-hydrolyzable ATP analog.

It is found in the cytoplasm. Its subcellular location is the cytoskeleton. It carries out the reaction ATP + H2O = ADP + phosphate + H(+). With respect to regulation, filament dynamics depend partially on MamJ. Functionally, protein with ATPase activity which forms dynamic cytoplasmic filaments that are involved in sorting, concatenating and/or correctly positioning of magnetosomes in the cell. Not absolutely necessary for assembly of short chains. Filaments grow from the both cell poles towards midcell, and are probably disassembled at the other end of the cell, a process known as treadmilling. Polymerizes in the presence of ATP, GTP or a non-hydrolyzable ATP analog. Required for correct segregation and positioning of magnetosomes following cell division. The sequence is that of Actin-like protein MamK from Magnetospirillum gryphiswaldense (strain DSM 6361 / JCM 21280 / NBRC 15271 / MSR-1).